Consider the following 277-residue polypeptide: Phosphonoacetaldehyde hydrolase-like protein (277 aa).

It belongs to the HAD-like hydrolase superfamily. PhnX family.

This is Phosphonoacetaldehyde hydrolase-like protein (phnX2) from Syntrophobacter fumaroxidans (strain DSM 10017 / MPOB).